A 93-amino-acid polypeptide reads, in one-letter code: Large ribosomal subunit protein uL23cz/uL23cy (93 aa).

This sequence belongs to the universal ribosomal protein uL23 family. As to quaternary structure, part of the 50S ribosomal subunit.

The protein localises to the plastid. It localises to the chloroplast. Functionally, binds to 23S rRNA. The chain is Large ribosomal subunit protein uL23cz/uL23cy (rpl23-A) from Arabidopsis thaliana (Mouse-ear cress).